A 203-amino-acid polypeptide reads, in one-letter code: Dephospho-CoA kinase (203 aa).

The DPCK domain occupies 6-203; sequence ILGLTGGIGS…FYLTLRGGRA (198 aa). 14-19 contributes to the ATP binding site; that stretch reads GSGKSA.

It belongs to the CoaE family.

It is found in the cytoplasm. It carries out the reaction 3'-dephospho-CoA + ATP = ADP + CoA + H(+). It functions in the pathway cofactor biosynthesis; coenzyme A biosynthesis; CoA from (R)-pantothenate: step 5/5. Functionally, catalyzes the phosphorylation of the 3'-hydroxyl group of dephosphocoenzyme A to form coenzyme A. In Pseudomonas aeruginosa (strain ATCC 15692 / DSM 22644 / CIP 104116 / JCM 14847 / LMG 12228 / 1C / PRS 101 / PAO1), this protein is Dephospho-CoA kinase.